A 116-amino-acid polypeptide reads, in one-letter code: Iron-sulfur cluster assembly protein CyaY (116 aa).

It belongs to the frataxin family.

Involved in iron-sulfur (Fe-S) cluster assembly. May act as a regulator of Fe-S biogenesis. The sequence is that of Iron-sulfur cluster assembly protein CyaY from Polaromonas sp. (strain JS666 / ATCC BAA-500).